The following is a 356-amino-acid chain: HTH-type transcriptional regulator AglR (356 aa).

One can recognise an HTH lacI-type domain in the interval 1–57; that stretch reads MPVNLKQLAELLGLSQTTVSRALNGYPEVNAETRARVLEAVRETGYRPNRAAQRLAT. The segment at residues 5-24 is a DNA-binding region (H-T-H motif); sequence LKQLAELLGLSQTTVSRALN. The segment at 337-356 is disordered; the sequence is TGPAPDRSPLPNPSPQVGGA.

Probable regulatory protein for the binding-protein-dependent transport system for alpha-glucosides such as sucrose, maltose and trehalose. This chain is HTH-type transcriptional regulator AglR (aglR), found in Rhizobium meliloti (strain 1021) (Ensifer meliloti).